Here is a 275-residue protein sequence, read N- to C-terminus: MAIKKFRPITPARRFMSVMDTSDITSKPTVRSLLVKVKASAGRNNNGRITSRHKEAGAKKLYRIIDFKRNKFGIEGTVATVEYDPYRNCRICLVSYLDGDKRYIIQPSGLKVGDKVQAAESGLDILPGNAMQLSNIPVGTMVHNIELKPGKGAQIARAAGGYAQIMGREDKYVILRLPSGEMRKILGVCMATVGVVGNEDYTNMVVGKAGRSRHLGIRPQTRGSAMNPIDHPHGGGEGKTNSGRHPVTPWGMPTKGYKTRKKKASDKLIISKRKK.

The disordered stretch occupies residues 216–275; the sequence is GIRPQTRGSAMNPIDHPHGGGEGKTNSGRHPVTPWGMPTKGYKTRKKKASDKLIISKRKK. Residues 257–275 show a composition bias toward basic residues; that stretch reads YKTRKKKASDKLIISKRKK.

It belongs to the universal ribosomal protein uL2 family. Part of the 50S ribosomal subunit. Forms a bridge to the 30S subunit in the 70S ribosome.

In terms of biological role, one of the primary rRNA binding proteins. Required for association of the 30S and 50S subunits to form the 70S ribosome, for tRNA binding and peptide bond formation. It has been suggested to have peptidyltransferase activity; this is somewhat controversial. Makes several contacts with the 16S rRNA in the 70S ribosome. This chain is Large ribosomal subunit protein uL2, found in Aliarcobacter butzleri (strain RM4018) (Arcobacter butzleri).